The chain runs to 132 residues: Small ribosomal subunit protein uS17c (132 aa).

A compositionally biased stretch (low complexity) spans 1 to 11 (MLLLSSPFVSV). Disordered regions lie at residues 1 to 23 (MLLLSSPFVSVSPPPPPLSSHGA) and 104 to 132 (PLPPRDTRRKSQLLPPLQSDDDQEPSSRE). Residues 1 to 31 (MLLLSSPFVSVSPPPPPLSSHGARPALRIEA) constitute a chloroplast transit peptide. Positions 122 to 132 (SDDDQEPSSRE) are enriched in acidic residues.

The protein belongs to the universal ribosomal protein uS17 family. As to quaternary structure, part of the 30S ribosomal subunit.

The protein resides in the plastid. It is found in the chloroplast. Functionally, one of the primary rRNA binding proteins, it binds specifically to the 5'-end of 16S ribosomal RNA. In terms of biological role, in the hcf60 mutation the Activator tag is inserted 17 base pars upstream of the initiation codon. This mutation is seedling lethal, due to plastid ribosome insufficiency. However under non-light stressed conditions photosynthesis and oxygen evolution can occur. The sequence is that of Small ribosomal subunit protein uS17c (RPS17) from Zea mays (Maize).